The primary structure comprises 1337 residues: Rho GTPase-activating protein 29 (1337 aa).

Polar residues predominate over residues 1-13 (MFRQGSNSGNKRM). 4 disordered regions span residues 1–20 (MFRQ…ARLS), 369–397 (REEY…LEKK), 513–551 (SSKT…ADEV), and 564–654 (ERRS…TGLS). The F-BAR domain maps to 225–488 (EQVDLLLLKN…QAKKYEPGQR (264 aa)). Residues 326–443 (LLARKNDLDK…SEILAQIRKL (118 aa)) adopt a coiled-coil conformation. Basic and acidic residues predominate over residues 369 to 384 (REEYEKARSSTSRTEE). Polar residues-rich tracts occupy residues 525 to 545 (QNST…SMDN) and 568 to 579 (NSSIDMQVPRTQ). The segment covering 596-613 (CSDSESAGGSSESRSMDS) has biased composition (low complexity). A Phorbol-ester/DAG-type zinc finger spans residues 676-723 (AHTHKLRKLRAPSKCRECDSLVVFHGAECEECSLACHKKCLETLAIQC). Positions 737–950 (IDFAQVVKNS…LLIKHHQMIF (214 aa)) constitute a Rho-GAP domain. Over residues 960–973 (TSPTVSQASFGSSI) the composition is skewed to polar residues. 5 disordered regions span residues 960–983 (TSPT…LSRH), 1016–1066 (MKTG…AKPV), 1083–1114 (SRNT…TNFY), 1149–1210 (PPSG…KPSD), and 1273–1337 (TVSR…AHFV). Over residues 974 to 983 (QDKESKLSRH) the composition is skewed to basic and acidic residues. Residues 1083–1092 (SRNTVEHDHS) show a composition bias toward basic and acidic residues. Composition is skewed to polar residues over residues 1161–1177 (MASQ…SQSG) and 1295–1310 (VTLS…TEEL). Residues 1325–1337 (RMQELEHREAHFV) show a composition bias toward basic and acidic residues.

In terms of biological role, GTPase activator for the Rho-type GTPases by converting them to an inactive GDP-bound state. Has strong activity toward RHOA, and weaker activity toward RAC1 and CDC42. In Danio rerio (Zebrafish), this protein is Rho GTPase-activating protein 29 (arhgap29).